A 2051-amino-acid polypeptide reads, in one-letter code: Fatty acid synthase subunit beta (2051 aa).

An N-acetylmethionine modification is found at Met1. The interval 1–468 (MDAYSTRPLT…VYDTFDGSDL (468 aa)) is acetyltransferase. Ser274 serves as the catalytic For acetyltransferase activity. Positions 480-868 (VDCIIRLPVK…TRGVMLWKEF (389 aa)) are enoyl reductase. Position 733 is a phosphothreonine (Thr733). Ser1121 is subject to Phosphoserine. The dehydratase stretch occupies residues 1144–1626 (GSEINWRHAS…LPNTALKTSI (483 aa)). A Glycyl lysine isopeptide (Lys-Gly) (interchain with G-Cter in ubiquitin) cross-link involves residue Lys1364. Residues 1523-1648 (NGSTLEQKVN…KFETRNEDDV (126 aa)) form the MaoC-like domain. The interval 1627–1845 (QHVGMINGRK…MTMQVAVPRD (219 aa)) is malonyl/palmitoyl transferase. Ser1808 (for malonyltransferase activity) is an active-site residue.

Belongs to the fungal fatty acid synthetase subunit beta family. As to quaternary structure, [Alpha(6)beta(6)] hexamers of two multifunctional subunits (alpha and beta).

The enzyme catalyses acetyl-CoA + n malonyl-CoA + 2n NADPH + 4n H(+) = a long-chain-acyl-CoA + n CoA + n CO2 + 2n NADP(+).. It catalyses the reaction holo-[ACP] + acetyl-CoA = acetyl-[ACP] + CoA. The catalysed reaction is holo-[ACP] + malonyl-CoA = malonyl-[ACP] + CoA. It carries out the reaction a (3R)-hydroxyacyl-[ACP] = a (2E)-enoyl-[ACP] + H2O. The enzyme catalyses a 2,3-saturated acyl-[ACP] + NAD(+) = a (2E)-enoyl-[ACP] + NADH + H(+). It catalyses the reaction (9Z)-octadecenoyl-[ACP] + H2O = (9Z)-octadecenoate + holo-[ACP] + H(+). Its function is as follows. Fatty acid synthetase catalyzes the formation of long-chain fatty acids from acetyl-CoA, malonyl-CoA and NADPH. The beta subunit contains domains for: [acyl-carrier-protein] acetyltransferase and malonyltransferase, S-acyl fatty acid synthase thioesterase, enoyl-[acyl-carrier-protein] reductase, and 3-hydroxypalmitoyl-[acyl-carrier-protein] dehydratase. The sequence is that of Fatty acid synthase subunit beta (FAS1) from Saccharomyces cerevisiae (strain ATCC 204508 / S288c) (Baker's yeast).